Consider the following 931-residue polypeptide: Protocadherin gamma-A5 (931 aa).

An N-terminal signal peptide occupies residues 1-29 (MASPPRGWGCGELLLPFMLLGTLCEPGSG). 6 Cadherin domains span residues 30–133 (QIRY…FPRF), 134–242 (RDEE…APLF), 243–347 (TPSE…APEV), 348–452 (ILTS…PPNF), 453–562 (PQAS…TPEI), and 570–683 (DGST…TPID). Topologically, residues 30–692 (QIRYSMPEEL…DPEDLDLTLY (663 aa)) are extracellular. 2 N-linked (GlcNAc...) asparagine glycosylation sites follow: asparagine 419 and asparagine 545. Residues 693-713 (LVVAVAAVSCVFLAFVIVLLV) form a helical membrane-spanning segment. The Cytoplasmic segment spans residues 714 to 931 (LRLRRWHKSR…KKKSGKKEKK (218 aa)). Disordered stretches follow at residues 800–840 (NKEE…WPNN) and 901–931 (ATLT…KEKK). A compositionally biased stretch (polar residues) spans 809–840 (APPNTDWRFSQAQRPGTSGSQNGDDTGTWPNN). The span at 921 to 931 (NKKKSGKKEKK) shows a compositional bias: basic residues.

It is found in the cell membrane. Potential calcium-dependent cell-adhesion protein. May be involved in the establishment and maintenance of specific neuronal connections in the brain. In Homo sapiens (Human), this protein is Protocadherin gamma-A5 (PCDHGA5).